The following is a 254-amino-acid chain: Stem 28 kDa glycoprotein (254 aa).

The signal sequence occupies residues 1–21 (MKMKVLVFFVATILVAWQCHA). The propeptide occupies 22 to 34 (YDMFPLRMNTGYG). An N-linked (GlcNAc...) asparagine glycan is attached at Asn129.

Belongs to the APS1/VSP family. As to expression, accumulates in the stems of developing soybean seedlings.

Functionally, may function as somatic storage protein during early seedling development. The sequence is that of Stem 28 kDa glycoprotein (VSPA) from Glycine max (Soybean).